The primary structure comprises 165 residues: Large ribosomal subunit protein uL10 (165 aa).

It belongs to the universal ribosomal protein uL10 family. In terms of assembly, part of the ribosomal stalk of the 50S ribosomal subunit. The N-terminus interacts with L11 and the large rRNA to form the base of the stalk. The C-terminus forms an elongated spine to which L12 dimers bind in a sequential fashion forming a multimeric L10(L12)X complex.

Forms part of the ribosomal stalk, playing a central role in the interaction of the ribosome with GTP-bound translation factors. The sequence is that of Large ribosomal subunit protein uL10 from Pectobacterium atrosepticum (strain SCRI 1043 / ATCC BAA-672) (Erwinia carotovora subsp. atroseptica).